The sequence spans 333 residues: Adenosine deaminase (333 aa).

Residues His12 and His14 each contribute to the Zn(2+) site. Positions 14, 16, and 170 each coordinate substrate. Zn(2+) is bound at residue His197. The active-site Proton donor is the Glu200. A Zn(2+)-binding site is contributed by Asp278. Residue Asp279 participates in substrate binding.

Belongs to the metallo-dependent hydrolases superfamily. Adenosine and AMP deaminases family. Adenosine deaminase subfamily. Zn(2+) is required as a cofactor.

It catalyses the reaction adenosine + H2O + H(+) = inosine + NH4(+). The enzyme catalyses 2'-deoxyadenosine + H2O + H(+) = 2'-deoxyinosine + NH4(+). Catalyzes the hydrolytic deamination of adenosine and 2-deoxyadenosine. This is Adenosine deaminase from Salmonella enteritidis PT4 (strain P125109).